An 811-amino-acid chain; its full sequence is Lysine-specific histone demethylase 1 homolog 3 (811 aa).

The span at 1–10 (MSDQPPPYTP) shows a compositional bias: pro residues. The segment at 1–79 (MSDQPPPYTP…PSAQPPPRAS (79 aa)) is disordered. Over residues 44 to 55 (NKRKRTGFRRKL) the composition is skewed to basic residues. Positions 56–71 (PSGSPAAPVAVAASPS) are enriched in low complexity. Residues 88–189 (NREPTAEAVT…FGVAPAIKER (102 aa)) form the SWIRM domain. Positions 227, 229, 235, and 609 each coordinate FAD. The disordered stretch occupies residues 790–811 (RNSSRTKTRPSKLKIGIPKSKS).

Belongs to the flavin monoamine oxidase family. FAD serves as cofactor.

In terms of biological role, probable histone demethylase. The polypeptide is Lysine-specific histone demethylase 1 homolog 3 (Oryza sativa subsp. japonica (Rice)).